We begin with the raw amino-acid sequence, 149 residues long: Large ribosomal subunit protein uL15 (149 aa).

The disordered stretch occupies residues 30-63 (GLGKTAGRGHKGSFARKGGGKIKPGFEGGQTPMQ). The span at 36 to 49 (GRGHKGSFARKGGG) shows a compositional bias: basic residues.

Belongs to the universal ribosomal protein uL15 family. Part of the 50S ribosomal subunit.

Its function is as follows. Binds to the 23S rRNA. This chain is Large ribosomal subunit protein uL15, found in Xylella fastidiosa (strain 9a5c).